A 310-amino-acid polypeptide reads, in one-letter code: ADP-L-glycero-D-manno-heptose-6-epimerase (310 aa).

Residues 10–11, 31–32, lysine 38, lysine 53, 75–79, and asparagine 92 each bind NADP(+); these read FI, DN, and EGACS. The Proton acceptor role is filled by tyrosine 140. Residue lysine 144 coordinates NADP(+). A substrate-binding site is contributed by asparagine 169. NADP(+)-binding residues include valine 170 and lysine 178. Residue lysine 178 is the Proton acceptor of the active site. Residues serine 180, histidine 187, 201–204, and arginine 209 each bind substrate; that span reads FEGS. Lysine 267 is subject to N6-acetyllysine. Tyrosine 272 provides a ligand contact to substrate.

Belongs to the NAD(P)-dependent epimerase/dehydratase family. HldD subfamily. As to quaternary structure, homopentamer. Requires NADP(+) as cofactor.

It carries out the reaction ADP-D-glycero-beta-D-manno-heptose = ADP-L-glycero-beta-D-manno-heptose. It functions in the pathway nucleotide-sugar biosynthesis; ADP-L-glycero-beta-D-manno-heptose biosynthesis; ADP-L-glycero-beta-D-manno-heptose from D-glycero-beta-D-manno-heptose 7-phosphate: step 4/4. Catalyzes the interconversion between ADP-D-glycero-beta-D-manno-heptose and ADP-L-glycero-beta-D-manno-heptose via an epimerization at carbon 6 of the heptose. This chain is ADP-L-glycero-D-manno-heptose-6-epimerase, found in Escherichia coli (strain SMS-3-5 / SECEC).